The chain runs to 133 residues: Small ribosomal subunit protein uS8 (133 aa).

Belongs to the universal ribosomal protein uS8 family. As to quaternary structure, part of the 30S ribosomal subunit.

Its function is as follows. One of the primary rRNA binding proteins, it binds directly to 16S rRNA central domain where it helps coordinate assembly of the platform of the 30S subunit. The protein is Small ribosomal subunit protein uS8 of Desulfurococcus amylolyticus (strain DSM 18924 / JCM 16383 / VKM B-2413 / 1221n) (Desulfurococcus kamchatkensis).